The sequence spans 273 residues: Diphthine methyl ester synthase (273 aa).

S-adenosyl-L-methionine contacts are provided by residues Leu10, Asp87, Gly90, 115–116, Leu166, Val224, and His249; that span reads SI.

This sequence belongs to the diphthine synthase family.

It catalyses the reaction 2-[(3S)-amino-3-carboxypropyl]-L-histidyl-[translation elongation factor 2] + 4 S-adenosyl-L-methionine = diphthine methyl ester-[translation elongation factor 2] + 4 S-adenosyl-L-homocysteine + 3 H(+). It functions in the pathway protein modification; peptidyl-diphthamide biosynthesis. In terms of biological role, S-adenosyl-L-methionine-dependent methyltransferase that catalyzes four methylations of the modified target histidine residue in translation elongation factor 2 (EF-2), to form an intermediate called diphthine methyl ester. The four successive methylation reactions represent the second step of diphthamide biosynthesis. The chain is Diphthine methyl ester synthase (dph5) from Dictyostelium discoideum (Social amoeba).